A 229-amino-acid polypeptide reads, in one-letter code: MIRCFAWTPLVGAPLITTVHFTSPPSLRIFASRSSAPSSSSSSSSTVAAASRRSISLSIIAVTSSVVSSFCFSSPALADFSEIPNSGGVKALDLRIGDGDVPIEGDQIEIHYYGRLAAKQGWRFDSTYDHKDSNGEAVPFTFVLGSSKVIPGIETAVRSMKVGGIRRVVIPPSQGYQNTSQEPLPPNFFDRQRLFTTIFNPTRLANGEGSTLGTLVFDIELVSTRRLHR.

The transit peptide at Met-1–Thr-63 directs the protein to the chloroplast. One can recognise a PPIase FKBP-type domain in the interval Gly-105–Arg-225.

It belongs to the FKBP-type PPIase family.

The protein resides in the plastid. It is found in the chloroplast thylakoid lumen. The enzyme catalyses [protein]-peptidylproline (omega=180) = [protein]-peptidylproline (omega=0). In terms of biological role, PPIases accelerate the folding of proteins. It catalyzes the cis-trans isomerization of proline imidic peptide bonds in oligopeptides. The chain is Peptidyl-prolyl cis-trans isomerase FKBP17-1, chloroplastic (FKBP17-1) from Arabidopsis thaliana (Mouse-ear cress).